The chain runs to 382 residues: Lipid-A-disaccharide synthase (382 aa).

This sequence belongs to the LpxB family.

It catalyses the reaction a lipid X + a UDP-2-N,3-O-bis[(3R)-3-hydroxyacyl]-alpha-D-glucosamine = a lipid A disaccharide + UDP + H(+). Its pathway is bacterial outer membrane biogenesis; LPS lipid A biosynthesis. Condensation of UDP-2,3-diacylglucosamine and 2,3-diacylglucosamine-1-phosphate to form lipid A disaccharide, a precursor of lipid A, a phosphorylated glycolipid that anchors the lipopolysaccharide to the outer membrane of the cell. The sequence is that of Lipid-A-disaccharide synthase from Koribacter versatilis (strain Ellin345).